A 102-amino-acid polypeptide reads, in one-letter code: YcgL domain-containing protein MS1047 (102 aa).

Positions 1 to 85 constitute a YcgL domain; the sequence is MLCAIYKSKK…KQESLFEQFK (85 aa).

This Mannheimia succiniciproducens (strain KCTC 0769BP / MBEL55E) protein is YcgL domain-containing protein MS1047.